Reading from the N-terminus, the 185-residue chain is Ribosome-recycling factor (185 aa).

The protein belongs to the RRF family.

The protein resides in the cytoplasm. Its function is as follows. Responsible for the release of ribosomes from messenger RNA at the termination of protein biosynthesis. May increase the efficiency of translation by recycling ribosomes from one round of translation to another. The chain is Ribosome-recycling factor from Streptomyces avermitilis (strain ATCC 31267 / DSM 46492 / JCM 5070 / NBRC 14893 / NCIMB 12804 / NRRL 8165 / MA-4680).